Reading from the N-terminus, the 172-residue chain is Adenine phosphoribosyltransferase (172 aa).

It belongs to the purine/pyrimidine phosphoribosyltransferase family. Homodimer.

The protein resides in the cytoplasm. It catalyses the reaction AMP + diphosphate = 5-phospho-alpha-D-ribose 1-diphosphate + adenine. It participates in purine metabolism; AMP biosynthesis via salvage pathway; AMP from adenine: step 1/1. In terms of biological role, catalyzes a salvage reaction resulting in the formation of AMP, that is energically less costly than de novo synthesis. The sequence is that of Adenine phosphoribosyltransferase from Rippkaea orientalis (strain PCC 8801 / RF-1) (Cyanothece sp. (strain PCC 8801)).